The primary structure comprises 307 residues: Transcription factor MYB78 (307 aa).

2 consecutive HTH myb-type domains span residues 23-79 and 80-130; these read EMDV…RPDV and RRGN…QKHA. 2 consecutive DNA-binding regions (H-T-H motif) follow at residues 51–75 and 103–126; these read WNSLARCAELKRTGKSCRLRWLNYL and WSKIAQYLPGRTDNEIKNYWRTRV.

The protein localises to the nucleus. In Arabidopsis thaliana (Mouse-ear cress), this protein is Transcription factor MYB78.